We begin with the raw amino-acid sequence, 824 residues long: AMP deaminase 2 (824 aa).

Residues 1–43 form a disordered region; sequence MASYPGPGKSKAKYPFKKRASLQASAAAPEARSGLGASPLQSA. Residues 10-20 show a composition bias toward basic residues; sequence SKAKYPFKKRA. Serine 21 is modified (phosphoserine). The segment covering 21–33 has biased composition (low complexity); that stretch reads SLQASAAAPEARS. Arginine 44 bears the Omega-N-methylarginine mark. Phosphoserine is present on residues serine 45, serine 63, and serine 79. Position 90 is a phosphotyrosine (tyrosine 90). A phosphoserine mark is found at serine 96 and serine 113. Threonine 133 carries the post-translational modification Phosphothreonine. Phosphoserine occurs at positions 135 and 137. Zn(2+) is bound by residues histidine 364 and histidine 366. Substrate is bound by residues histidine 366 and 435 to 440; that span reads KFNAKY. Histidine 633 provides a ligand contact to Zn(2+). Position 636 (glutamate 636) interacts with substrate. Histidine 655 (proton acceptor) is an active-site residue. Residue aspartate 710 participates in Zn(2+) binding. 711 to 714 contributes to the substrate binding site; sequence DPLQ.

Belongs to the metallo-dependent hydrolases superfamily. Adenosine and AMP deaminases family. Homotetramer. It depends on Zn(2+) as a cofactor.

It catalyses the reaction AMP + H2O + H(+) = IMP + NH4(+). The protein operates within purine metabolism; IMP biosynthesis via salvage pathway; IMP from AMP: step 1/1. In terms of biological role, AMP deaminase plays a critical role in energy metabolism. Catalyzes the deamination of AMP to IMP and plays an important role in the purine nucleotide cycle. This chain is AMP deaminase 2, found in Rattus norvegicus (Rat).